The primary structure comprises 2346 residues: Acetyl-CoA carboxylase 1 (2346 aa).

M1 is subject to N-acetylmethionine. A phosphoserine mark is found at S5, S23, S25, S29, S34, S48, S50, and S53. T58 bears the Phosphothreonine mark. S78 is modified (phosphoserine). S80 carries the phosphoserine; by AMPK modification. The 502-residue stretch at 117 to 618 (VIEKVLIANN…DTGWLDRLIA (502 aa)) folds into the Biotin carboxylation domain. Positions 275-466 (SKRILNVPQE…LPAAQLQIAM (192 aa)) constitute an ATP-grasp domain. ATP is bound at residue 315–320 (GGGGKG). The Mg(2+) site is built by E424, E437, and N439. Mn(2+) is bound by residues E424, E437, and N439. R441 is an active-site residue. T610 is modified (phosphothreonine). Positions 745–819 (FEKENDPSVL…DPGCVIAKMQ (75 aa)) constitute a Biotinyl-binding domain. N6-biotinyllysine is present on K786. Phosphoserine is present on residues S835, S1201, S1216, and S1218. T1227 bears the Phosphothreonine mark. 3 positions are modified to phosphoserine: S1259, S1263, and S1273. Residue K1334 is modified to N6-acetyllysine. A CoA carboxyltransferase N-terminal domain is found at 1576-1914 (PYVTKDLLQS…SVYSSVPLLN (339 aa)). A carboxyltransferase region spans residues 1576–2234 (PYVTKDLLQS…EDLVKKKIHN (659 aa)). CoA contacts are provided by R1823, K2127, and R2129. Positions 1918–2234 (PIDRVIEFVP…EDLVKKKIHN (317 aa)) constitute a CoA carboxyltransferase C-terminal domain. A Phosphothreonine modification is found at T2153.

As to quaternary structure, monomer, homodimer, and homotetramer. Can form filamentous polymers. Interacts in its inactive phosphorylated form with the BRCT domains of BRCA1 which prevents ACACA dephosphorylation and inhibits lipid synthesis. Interacts with MID1IP1; interaction with MID1IP1 promotes oligomerization and increases its activity. Mg(2+) is required as a cofactor. It depends on Mn(2+) as a cofactor. Requires biotin as cofactor. Post-translationally, phosphorylation on Ser-1263 is required for interaction with BRCA1. Phosphorylation at Ser-80 by AMPK inactivates enzyme activity. In terms of processing, the biotin cofactor is covalently attached to the central biotinyl-binding domain and is required for the catalytic activity. Expressed at high levels in mammary gland.

It localises to the cytoplasm. The protein localises to the cytosol. It catalyses the reaction hydrogencarbonate + acetyl-CoA + ATP = malonyl-CoA + ADP + phosphate + H(+). It participates in lipid metabolism; malonyl-CoA biosynthesis; malonyl-CoA from acetyl-CoA: step 1/1. Inhibited by phosphorylation. Citrate promotes oligomerization of the protein into filaments that correspond to the most active form of the carboxylase. Cytosolic enzyme that catalyzes the carboxylation of acetyl-CoA to malonyl-CoA, the first and rate-limiting step of de novo fatty acid biosynthesis. This is a 2 steps reaction starting with the ATP-dependent carboxylation of the biotin carried by the biotin carboxyl carrier (BCC) domain followed by the transfer of the carboxyl group from carboxylated biotin to acetyl-CoA. This Ovis aries (Sheep) protein is Acetyl-CoA carboxylase 1.